A 138-amino-acid chain; its full sequence is MRVKHAVVLLMLISPLSWAGTMTFQFRNPNFGGNPNNGAFLLNSAQAQNSYKDPSYNDDFGIETPSALDNFTQAIQSQILGGLLSNINTGKPGRMVTNDYIVDIANRDGQLQLNVTDRKTGQTSTIQVSGLQNNSTDF.

A signal peptide spans 1–19 (MRVKHAVVLLMLISPLSWA).

Functionally, may be involved in the biogenesis of curli organelles. The sequence is that of Curli production assembly/transport component CsgF (csgF) from Escherichia coli O157:H7.